The sequence spans 433 residues: 4-hydroxy-3-methylbut-2-en-1-yl diphosphate synthase (flavodoxin) (433 aa).

4 residues coordinate [4Fe-4S] cluster: cysteine 320, cysteine 323, cysteine 366, and glutamate 373.

The protein belongs to the IspG family. Requires [4Fe-4S] cluster as cofactor.

It catalyses the reaction (2E)-4-hydroxy-3-methylbut-2-enyl diphosphate + oxidized [flavodoxin] + H2O + 2 H(+) = 2-C-methyl-D-erythritol 2,4-cyclic diphosphate + reduced [flavodoxin]. The protein operates within isoprenoid biosynthesis; isopentenyl diphosphate biosynthesis via DXP pathway; isopentenyl diphosphate from 1-deoxy-D-xylulose 5-phosphate: step 5/6. Its function is as follows. Converts 2C-methyl-D-erythritol 2,4-cyclodiphosphate (ME-2,4cPP) into 1-hydroxy-2-methyl-2-(E)-butenyl 4-diphosphate. This is 4-hydroxy-3-methylbut-2-en-1-yl diphosphate synthase (flavodoxin) from Beijerinckia indica subsp. indica (strain ATCC 9039 / DSM 1715 / NCIMB 8712).